The primary structure comprises 852 residues: Exported protein YdbA (852 aa).

The N-terminal stretch at M1–A21 is a signal peptide. Disordered stretches follow at residues T30 to P50, D91 to D145, T307 to D354, T407 to Q449, and N506 to K531. Over residues T307–G319 the composition is skewed to low complexity. Positions G339–K348 are enriched in polar residues. Over residues N506–N516 the composition is skewed to low complexity. A compositionally biased stretch (polar residues) spans D517 to T526.

It localises to the secreted. The full-length protein (which is about 2000 amino acids long) is part of the autotransporter family. In Escherichia coli (strain K12), this protein is Exported protein YdbA (ydbA).